The following is a 104-amino-acid chain: Small ribosomal subunit protein uS10 (104 aa).

This sequence belongs to the universal ribosomal protein uS10 family. In terms of assembly, part of the 30S ribosomal subunit.

Its function is as follows. Involved in the binding of tRNA to the ribosomes. The sequence is that of Small ribosomal subunit protein uS10 from Dichelobacter nodosus (strain VCS1703A).